Reading from the N-terminus, the 516-residue chain is MDGAGESRLGGDGGGDGSVGVQIRQTRMLPDFLQSVNLKYVKLGYHYLISNLLTLCLFPLAVVISVEASQMNPDDLKQLWIHLQYNLVSIIICSAILVFGLTVYVMTRPRPVYLVDFSCYLPPDHLKAPYARFMEHSRLTGDFDDSALEFQRKILERSGLGEDTYVPEAMHYVPPRISMAAAREEAEQVMFGALDNLFANTNVKPKDIGILVVNCSLFNPTPSLSAMIVNKYKLRGNIRSYNLGGMGCSAGVIAVDLAKDMLLVHRNTYAVVVSTENITQNWYFGNKKSMLIPNCLFRVGGSAVLLSNKSRDKRRSKYRLVHVVRTHRGADDKAFRCVYQEQDDTGRTGVSLSKDLMAIAGETLKTNITTLGPLVLPISEQILFFMTLVVKKLFNGKVKPYIPDFKLAFEHFCIHAGGRAVIDELEKNLQLSPVHVEASRMTLHRFGNTSSSSIWYELAYIEAKGRMRRGNRVWQIAFGSGFKCNSAIWEALRHVKPSNNSPWEDCIDKYPVTLSY.

2 helical membrane-spanning segments follow: residues 48-68 (LISN…SVEA) and 87-107 (LVSI…YVMT). The FAE domain occupies 104 to 393 (YVMTRPRPVY…FFMTLVVKKL (290 aa)). Residues Cys248, His327, His411, His415, His444, and Asn448 contribute to the active site.

Belongs to the thiolase-like superfamily. Chalcone/stilbene synthases family. In terms of tissue distribution, expressed at low levels in siliques, flowers, leaves and stems.

It is found in the membrane. The catalysed reaction is a very-long-chain acyl-CoA + malonyl-CoA + H(+) = a very-long-chain 3-oxoacyl-CoA + CO2 + CoA. It participates in lipid metabolism; fatty acid biosynthesis. The chain is 3-ketoacyl-CoA synthase 4 from Arabidopsis thaliana (Mouse-ear cress).